Reading from the N-terminus, the 142-residue chain is ATP synthase epsilon chain (142 aa).

Belongs to the ATPase epsilon chain family. In terms of assembly, F-type ATPases have 2 components, CF(1) - the catalytic core - and CF(0) - the membrane proton channel. CF(1) has five subunits: alpha(3), beta(3), gamma(1), delta(1), epsilon(1). CF(0) has three main subunits: a, b and c.

It is found in the cell inner membrane. Produces ATP from ADP in the presence of a proton gradient across the membrane. This chain is ATP synthase epsilon chain, found in Shewanella pealeana (strain ATCC 700345 / ANG-SQ1).